The chain runs to 2019 residues: Sodium channel protein type 5 subunit alpha (2019 aa).

Residues 1 to 129 (MANFLLPRGT…VRRAAVKILV (129 aa)) lie on the Cytoplasmic side of the membrane. The tract at residues 27-66 (RMAEKQARGSATSQESREGLPEEEAPRPQLDLQASKKLPD) is disordered. Phosphoserine is present on serine 36. Residue threonine 38 is modified to Phosphothreonine. Residues 41 to 52 (ESREGLPEEEAP) are compositionally biased toward basic and acidic residues. An I repeat occupies 113 to 420 (VLSPFHPVRR…VVAMAYEEQN (308 aa)). A helical transmembrane segment spans residues 130 to 149 (HSLFSMLIMCTILTNCVFMA). Topologically, residues 150 to 157 (QHDPPPWT) are extracellular. The helical transmembrane segment at 158 to 179 (KYVEYTFTAIYTFESLVKILAR) threads the bilayer. Residues 180-188 (GFCLHAFTF) lie on the Cytoplasmic side of the membrane. Residues 189-209 (LRDPWNWLDFSVIVMAYTTEF) form a helical membrane-spanning segment. Residues 210–216 (VDLGNVS) lie on the Extracellular side of the membrane. A glycan (N-linked (GlcNAc...) asparagine) is linked at asparagine 214. A helical membrane pass occupies residues 217-236 (ALRTFRVLRALKTISVISGL). The Cytoplasmic portion of the chain corresponds to 237–249 (KTIVGALIQSVKK). The helical transmembrane segment at 250–272 (LADVMVLTVFCLSVFALIGLQLF) threads the bilayer. The Extracellular portion of the chain corresponds to 273–357 (MGNLRHKCVR…PDHGYTSFDS (85 aa)). Residues cysteine 280 and cysteine 335 are joined by a disulfide bond. N-linked (GlcNAc...) asparagine glycosylation is found at asparagine 283, asparagine 288, asparagine 291, asparagine 318, and asparagine 328. The pore-forming intramembrane region spans 358 to 378 (FAWAFLALFRLMTQDCWERLY). Over 379 to 386 (QQTLRSAG) the chain is Extracellular. Residues 387 to 413 (KIYMIFFMLVIFLGSFYLVNLILAVVA) traverse the membrane as a helical segment. Residues 414–719 (MAYEEQNQAT…VKFVVMDPFA (306 aa)) lie on the Cytoplasmic side of the membrane. A phosphoserine mark is found at serine 457, serine 460, serine 483, and serine 484. 2 disordered regions span residues 461–575 (LEMS…TQGQ) and 610–647 (EATSPGSHLLRPIVLDRPPDTTTPSEEPGGPQMLTPQA). Threonine 486 carries the phosphothreonine modification. Residues 491-503 (DDRLPKSDSEDGP) are compositionally biased toward basic and acidic residues. Phosphoserine occurs at positions 497 and 510. The segment covering 507–528 (NQLSLTHGLSRTSMRPRSSRGS) has biased composition (polar residues). Arginine 526 bears the Dimethylated arginine; alternate mark. Residue arginine 526 is modified to Omega-N-methylarginine; alternate. Phosphoserine is present on residues serine 539 and serine 571. Phosphoserine is present on residues serine 664 and serine 667. One copy of the II repeat lies at 699 to 971 (CCPLWMSIKQ…QLALARIQRG (273 aa)). Residues 720-737 (DLTITMCIVLNTLFMALE) form a helical membrane-spanning segment. At 738-746 (HYNMTAEFE) the chain is on the extracellular side. Asparagine 740 is a glycosylation site (N-linked (GlcNAc...) asparagine). The chain crosses the membrane as a helical span at residues 747 to 769 (EMLQVGNLVFTGIFTAEMTFKII). The Cytoplasmic portion of the chain corresponds to 770–775 (ALDPYY). A helical membrane pass occupies residues 776–796 (YFQQGWNIFDSIIVILSLMEL). The Extracellular segment spans residues 797–806 (GLSRMGNLSV). N-linked (GlcNAc...) asparagine glycosylation is present at asparagine 803. The chain crosses the membrane as a helical span at residues 807 to 821 (LRSFRLLRVFKLAKS). Residues 822–838 (WPTLNTLIKIIGNSVGA) are Cytoplasmic-facing. Residues 839-860 (LGNLTLVLAIIVFIFAVVGMQL) form a helical membrane-spanning segment. At 861–886 (FGKNYSELRHRISDSGLLPRWHMMDF) the chain is on the extracellular side. The N-linked (GlcNAc...) asparagine glycan is linked to asparagine 864. The pore-forming intramembrane region spans 887 to 905 (FHAFLIIFRILCGEWIETM). The Extracellular segment spans residues 906–914 (WDCMEVSGQ). Cysteine 908 and cysteine 917 are oxidised to a cystine. The chain crosses the membrane as a helical span at residues 915–943 (SLCLLVFLLVMVIGNLVVLNLFLALLLSS). Residues 944 to 1205 (FSADNLTAPD…LRKTCYRIVE (262 aa)) are Cytoplasmic-facing. The tract at residues 1000 to 1144 (HSQLPSCIAA…EDSYSEGSTA (145 aa)) is disordered. Residues 1017 to 1036 (EVEKAPPARKETRFEEDKRP) show a composition bias toward basic and acidic residues. Residues 1056–1075 (SDTDDQEEDEENSLGTEEEE) are compositionally biased toward acidic residues. Over residues 1098–1115 (SQVSETTSSEAEASTSQA) the composition is skewed to low complexity. One copy of the III repeat lies at 1189–1503 (PGKVWWRLRK…KKYYNAMKKL (315 aa)). Residues 1206 to 1227 (HSWFETFIIFMILLSSGALAFE) form a helical membrane-spanning segment. At 1228 to 1238 (DIYLEERKTIK) the chain is on the extracellular side. Residues 1239–1261 (VLLEYADKMFTYVFVLEMLLKWV) form a helical membrane-spanning segment. Residues 1262-1270 (AYGFKKYFT) are Cytoplasmic-facing. Residues 1271 to 1293 (NAWCWLDFLIVDVSLVSLVANTL) form a helical membrane-spanning segment. The Extracellular portion of the chain corresponds to 1294-1299 (GFAEMG). A helical membrane pass occupies residues 1300 to 1319 (PIKSLRTLRALRPLRALSRF). Residues 1320–1332 (EGMRVVVNALVGA) lie on the Cytoplasmic side of the membrane. Residues 1333–1357 (IPSIMNVLLVCLIFWLIFSIMGVNL) form a helical membrane-spanning segment. The Extracellular segment spans residues 1358–1402 (FAGKFGRCINQTEGDLPLNYTIVNNKSECESFNVTGELYWTKVKV). Asparagine 1367, asparagine 1376, asparagine 1382, and asparagine 1390 each carry an N-linked (GlcNAc...) asparagine glycan. The segment at residues 1403 to 1424 (NFDNVGAGYLALLQVATFKGWM) is an intramembrane region (pore-forming). Residues 1425 to 1447 (DIMYAAVDSRGYEEQPQWEDNLY) are Extracellular-facing. The chain crosses the membrane as a helical span at residues 1448 to 1472 (MYIYFVVFIIFGSFFTLNLFIGVII). The Cytoplasmic segment spans residues 1473–1530 (DNFNQQKKKLGGQDIFMTEEQKKYYNAMKKLGSKKPQKPIPRPLNKYQGFIFDIVTKQ). At serine 1505 the chain carries Phosphoserine; by PKC. One copy of the IV repeat lies at 1512 to 1809 (IPRPLNKYQG…WEKFDPEATQ (298 aa)). A helical membrane pass occupies residues 1531–1549 (AFDVTIMFLICLNMVTMMV). The Extracellular portion of the chain corresponds to 1550 to 1560 (ETDDQSPEKVN). The chain crosses the membrane as a helical span at residues 1561–1582 (ILAKINLLFVAIFTGECIVKMA). The Cytoplasmic segment spans residues 1583 to 1591 (ALRHYYFTN). Residues 1592–1614 (SWNIFDFVVVILSIVGTVLSDII) form a helical membrane-spanning segment. Topologically, residues 1615-1621 (QKYFFSP) are extracellular. A helical transmembrane segment spans residues 1622–1642 (TLFRVIRLARIGRILRLIRGA). The Cytoplasmic portion of the chain corresponds to 1643-1652 (KGIRTLLFAL). A helical membrane pass occupies residues 1653–1681 (MMSLPALFNIGLLLFLVMFIYSIFGMANF). At 1682–1699 (AYVKWEAGIDDMFNFQTF) the chain is on the extracellular side. Positions 1700–1716 (ANSMLCLFQITTSAGWD) form an intramembrane region, pore-forming. The Extracellular portion of the chain corresponds to 1717-1747 (GLLSPILNTGPPYCDPNLPNSNGSRGNCGSP). A helical membrane pass occupies residues 1748–1773 (AVGILFFTTYIIISFLIVVNMYIAII). Residues 1774–2019 (LENFSVATEE…SPDRDRESIV (246 aa)) are Cytoplasmic-facing. An interaction with FGF13 region spans residues 1841–1903 (DLPMVSGDRI…ITTTLRRKHE (63 aa)). The IQ domain occupies 1903–1932 (EEVSATVIQRAFRRHLLQRSVKHASFLFRQ). The segment covering 1963 to 1982 (SGPLSSSSISSTSFPPSYDS) has biased composition (low complexity). A disordered region spans residues 1963–2019 (SGPLSSSSISSTSFPPSYDSVTRATSDNLPVRASDYSRSEDLADFPPSPDRDRESIV). Positions 1977 to 1980 (PPSY) are interaction with NEDD4, NEDD4L and WWP2.

It belongs to the sodium channel (TC 1.A.1.10) family. Nav1.5/SCN5A subfamily. In terms of assembly, cannot form the same regulatory interactions with beta subunits as other Navs do. Interacts with the PDZ domain of the syntrophin SNTA1, SNTB1 and SNTB2. Interacts with NEDD4, NEDD4L, WWP2 and GPD1L. Interacts with CALM. Interacts with FGF13; the interaction is direct and may regulate SNC5A density at membranes and function. Interacts with FGF12 and FGF14. Interacts with ANK3. Interacts with PKP2 (via N-terminus). Interacts with TMEM233. Interacts with XIRP2; the interaction is required for normal action potential configuration in the heart. Post-translationally, phosphorylation at Ser-1505 by PKC in a highly conserved cytoplasmic loop slows inactivation of the sodium channel and reduces peak sodium currents. Regulated through phosphorylation by CaMK2D. In terms of processing, ubiquitinated by NEDD4L; which promotes its endocytosis. Does not seem to be ubiquitinated by NEDD4 or WWP2. Lacks the cysteine which covalently binds the conotoxin GVIIJ. This cysteine (position 868) is speculated in other sodium channel subunits alpha to be implied in covalent binding with the sodium channel subunit beta-2 or beta-4. Post-translationally, N-glycosylated at Asn-318, probably hinders potential interaction with regulatory subunits. As to expression, expressed in the myocardium (at protein level).

It is found in the cell membrane. The protein localises to the cytoplasm. Its subcellular location is the perinuclear region. The protein resides in the sarcolemma. It localises to the T-tubule. It is found in the cell junction. It carries out the reaction Na(+)(in) = Na(+)(out). With respect to regulation, channel inactivation is regulated by intracellular calcium levels. It is a tetrodotoxin-resistant voltage-gated Na(+) channel (Nav). In terms of biological role, pore-forming subunit of Nav1.5, a voltage-gated sodium (Nav) channel that directly mediates the depolarizing phase of action potentials in excitable membranes. Navs, also called VGSCs (voltage-gated sodium channels) or VDSCs (voltage-dependent sodium channels), operate by switching between closed and open conformations depending on the voltage difference across the membrane. In the open conformation they allow Na(+) ions to selectively pass through the pore, along their electrochemical gradient. The influx of Na(+) ions provokes membrane depolarization, initiating the propagation of electrical signals throughout cells and tissues. Nav1.5 is the predominant sodium channel expressed in myocardial cells and it is responsible for the initial upstroke of the action potential in cardiac myocytes, thereby initiating the heartbeat. Required for normal electrical conduction including formation of the infranodal ventricular conduction system and normal action potential configuration, as a result of its interaction with XIRP2. The polypeptide is Sodium channel protein type 5 subunit alpha (Mus musculus (Mouse)).